The following is a 340-amino-acid chain: Fructoselysine 6-phosphate deglycase (340 aa).

2 consecutive SIS domains span residues 35-169 (IVEE…RLAP) and 201-331 (LGEL…PDER).

As to quaternary structure, homododecamer.

The catalysed reaction is N(6)-(6-phospho-D-fructosyl)-L-lysine + H2O = D-glucose 6-phosphate + L-lysine. It functions in the pathway carbohydrate metabolism; fructoselysine degradation; D-glucose 6-phosphate and lysine from fructoselysine: step 2/2. Strongly inhibited by ZnCl(2). Catalyzes the reversible conversion of fructoselysine 6-phosphate to glucose 6-phosphate and lysine. Functions in a fructoselysine degradation pathway that allows E.coli to grow on fructoselysine or psicoselysine. This Escherichia coli (strain K12) protein is Fructoselysine 6-phosphate deglycase.